Consider the following 304-residue polypeptide: Putative F-box/LRR-repeat protein 21 (304 aa).

In terms of domain architecture, F-box spans 43–90 (RRNWVDLPPELTTSILLRLSLTDILDNAQKVCKEWRRICKDPSMWRKI). 4 LRR repeats span residues 132–159 (LSYITDRNLRSLGLGMCFPRVTKLGVVN), 173–198 (THSCIKLDLKAIGHACPQLKTLKLNS), 218–241 (GPLECDDDALAIAESMPKLHHLQL), and 243–268 (ANRLTNTGLNAILDGCPHLEHLDVRK).

This is Putative F-box/LRR-repeat protein 21 (FBL21) from Arabidopsis thaliana (Mouse-ear cress).